A 713-amino-acid polypeptide reads, in one-letter code: Polyribonucleotide nucleotidyltransferase (713 aa).

Aspartate 498 and aspartate 504 together coordinate Mg(2+). A KH domain is found at 565–631 (PRILSLKVPV…RIEDLTREAK (67 aa)). Residues 633–701 (GEIYEGTVTR…ERGKIDLIRP (69 aa)) form the S1 motif domain.

Belongs to the polyribonucleotide nucleotidyltransferase family. Mg(2+) is required as a cofactor.

The protein resides in the cytoplasm. The catalysed reaction is RNA(n+1) + phosphate = RNA(n) + a ribonucleoside 5'-diphosphate. In terms of biological role, involved in mRNA degradation. Catalyzes the phosphorolysis of single-stranded polyribonucleotides processively in the 3'- to 5'-direction. This is Polyribonucleotide nucleotidyltransferase from Thermus thermophilus (strain ATCC 27634 / DSM 579 / HB8).